The primary structure comprises 112 residues: UPF0235 protein Atu2660 (112 aa).

The protein belongs to the UPF0235 family.

This Agrobacterium fabrum (strain C58 / ATCC 33970) (Agrobacterium tumefaciens (strain C58)) protein is UPF0235 protein Atu2660.